The primary structure comprises 160 residues: Large ribosomal subunit protein uL15 (160 aa).

Over residues 1–13 (MKLNELRDNEGAA) the composition is skewed to basic and acidic residues. The segment at 1-51 (MKLNELRDNEGAARKKKRVARGPGSGKGKTAGRGIKGQKSRSGVALNGYEG) is disordered. Gly residues predominate over residues 23–35 (PGSGKGKTAGRGI).

Belongs to the universal ribosomal protein uL15 family. As to quaternary structure, part of the 50S ribosomal subunit.

Its function is as follows. Binds to the 23S rRNA. The chain is Large ribosomal subunit protein uL15 from Cereibacter sphaeroides (strain ATCC 17025 / ATH 2.4.3) (Rhodobacter sphaeroides).